The chain runs to 133 residues: Phosphoribosyl-AMP cyclohydrolase (133 aa).

Asp-77 is a Mg(2+) binding site. Cys-78 contributes to the Zn(2+) binding site. 2 residues coordinate Mg(2+): Asp-79 and Asp-81. Residues Cys-95 and Cys-102 each contribute to the Zn(2+) site.

It belongs to the PRA-CH family. Homodimer. Requires Mg(2+) as cofactor. It depends on Zn(2+) as a cofactor.

It localises to the cytoplasm. The catalysed reaction is 1-(5-phospho-beta-D-ribosyl)-5'-AMP + H2O = 1-(5-phospho-beta-D-ribosyl)-5-[(5-phospho-beta-D-ribosylamino)methylideneamino]imidazole-4-carboxamide. It participates in amino-acid biosynthesis; L-histidine biosynthesis; L-histidine from 5-phospho-alpha-D-ribose 1-diphosphate: step 3/9. In terms of biological role, catalyzes the hydrolysis of the adenine ring of phosphoribosyl-AMP. This is Phosphoribosyl-AMP cyclohydrolase from Azotobacter vinelandii (strain DJ / ATCC BAA-1303).